The sequence spans 208 residues: Imidazoleglycerol-phosphate dehydratase (208 aa).

Belongs to the imidazoleglycerol-phosphate dehydratase family.

It localises to the cytoplasm. The catalysed reaction is D-erythro-1-(imidazol-4-yl)glycerol 3-phosphate = 3-(imidazol-4-yl)-2-oxopropyl phosphate + H2O. The protein operates within amino-acid biosynthesis; L-histidine biosynthesis; L-histidine from 5-phospho-alpha-D-ribose 1-diphosphate: step 6/9. The sequence is that of Imidazoleglycerol-phosphate dehydratase from Psychrobacter sp. (strain PRwf-1).